We begin with the raw amino-acid sequence, 1082 residues long: Integrator complex subunit 3 homolog (1082 aa).

Disordered stretches follow at residues 483-563 (PGPP…VSDD), 923-945 (YPSN…TAPT), and 1005-1082 (DETS…SDSD). Composition is skewed to low complexity over residues 517 to 528 (PAAKAASTAASA) and 542 to 555 (TKPA…TTTT). Polar residues predominate over residues 936–945 (KSAQQNTAPT). 2 stretches are compositionally biased toward low complexity: residues 1008–1018 (STTVGRRGTSS) and 1033–1056 (EKAA…ASAK).

Belongs to the Integrator subunit 3 family. Belongs to the multiprotein complex Integrator. The core complex associates with protein phosphatase 2A subunits, to form the Integrator-PP2A (INTAC) complex.

The protein resides in the nucleus. Its subcellular location is the cytoplasm. In terms of biological role, component of the integrator complex, a multiprotein complex that terminates RNA polymerase II (Pol II) transcription in the promoter-proximal region of genes. The integrator complex provides a quality checkpoint during transcription elongation by driving premature transcription termination of transcripts that are unfavorably configured for transcriptional elongation: the complex terminates transcription by (1) catalyzing dephosphorylation of the C-terminal domain (CTD) of Pol II subunit Polr2A/Rbp1 and Spt5, and (2) degrading the exiting nascent RNA transcript via endonuclease activity. The integrator complex is also involved in the 3'-end processing of the U7 snRNA, and also the spliceosomal snRNAs U1, U2, U4 and U5. The polypeptide is Integrator complex subunit 3 homolog (Anopheles gambiae (African malaria mosquito)).